A 237-amino-acid chain; its full sequence is Phosphatidylserine decarboxylase proenzyme (237 aa).

Ser-206 (schiff-base intermediate with substrate; via pyruvic acid) is an active-site residue. At Ser-206 the chain carries Pyruvic acid (Ser); by autocatalysis.

The protein belongs to the phosphatidylserine decarboxylase family. PSD-A subfamily. As to quaternary structure, heterodimer of a large membrane-associated beta subunit and a small pyruvoyl-containing alpha subunit. It depends on pyruvate as a cofactor. In terms of processing, is synthesized initially as an inactive proenzyme. Formation of the active enzyme involves a self-maturation process in which the active site pyruvoyl group is generated from an internal serine residue via an autocatalytic post-translational modification. Two non-identical subunits are generated from the proenzyme in this reaction, and the pyruvate is formed at the N-terminus of the alpha chain, which is derived from the carboxyl end of the proenzyme. The post-translation cleavage follows an unusual pathway, termed non-hydrolytic serinolysis, in which the side chain hydroxyl group of the serine supplies its oxygen atom to form the C-terminus of the beta chain, while the remainder of the serine residue undergoes an oxidative deamination to produce ammonia and the pyruvoyl prosthetic group on the alpha chain.

It is found in the cell membrane. The enzyme catalyses a 1,2-diacyl-sn-glycero-3-phospho-L-serine + H(+) = a 1,2-diacyl-sn-glycero-3-phosphoethanolamine + CO2. The protein operates within phospholipid metabolism; phosphatidylethanolamine biosynthesis; phosphatidylethanolamine from CDP-diacylglycerol: step 2/2. In terms of biological role, catalyzes the formation of phosphatidylethanolamine (PtdEtn) from phosphatidylserine (PtdSer). In Mycobacteroides abscessus (strain ATCC 19977 / DSM 44196 / CCUG 20993 / CIP 104536 / JCM 13569 / NCTC 13031 / TMC 1543 / L948) (Mycobacterium abscessus), this protein is Phosphatidylserine decarboxylase proenzyme.